Here is a 449-residue protein sequence, read N- to C-terminus: Phosphoglucosamine mutase (449 aa).

The active-site Phosphoserine intermediate is Ser-101. Positions 101, 242, 244, and 246 each coordinate Mg(2+). Ser-101 carries the phosphoserine modification.

The protein belongs to the phosphohexose mutase family. Mg(2+) is required as a cofactor. Post-translationally, activated by phosphorylation.

It catalyses the reaction alpha-D-glucosamine 1-phosphate = D-glucosamine 6-phosphate. In terms of biological role, catalyzes the conversion of glucosamine-6-phosphate to glucosamine-1-phosphate. The sequence is that of Phosphoglucosamine mutase from Bradyrhizobium sp. (strain BTAi1 / ATCC BAA-1182).